Reading from the N-terminus, the 236-residue chain is Phosphoribosylaminoimidazole-succinocarboxamide synthase (236 aa).

The protein belongs to the SAICAR synthetase family.

The enzyme catalyses 5-amino-1-(5-phospho-D-ribosyl)imidazole-4-carboxylate + L-aspartate + ATP = (2S)-2-[5-amino-1-(5-phospho-beta-D-ribosyl)imidazole-4-carboxamido]succinate + ADP + phosphate + 2 H(+). It participates in purine metabolism; IMP biosynthesis via de novo pathway; 5-amino-1-(5-phospho-D-ribosyl)imidazole-4-carboxamide from 5-amino-1-(5-phospho-D-ribosyl)imidazole-4-carboxylate: step 1/2. This chain is Phosphoribosylaminoimidazole-succinocarboxamide synthase, found in Campylobacter jejuni (strain RM1221).